The following is a 123-amino-acid chain: UPF0738 protein BCG9842_B4089 (123 aa).

It belongs to the UPF0738 family.

The sequence is that of UPF0738 protein BCG9842_B4089 from Bacillus cereus (strain G9842).